A 573-amino-acid polypeptide reads, in one-letter code: 2-succinyl-5-enolpyruvyl-6-hydroxy-3-cyclohexene-1-carboxylate synthase (573 aa).

This sequence belongs to the TPP enzyme family. MenD subfamily. In terms of assembly, homodimer. It depends on Mg(2+) as a cofactor. Mn(2+) serves as cofactor. Requires thiamine diphosphate as cofactor.

The enzyme catalyses isochorismate + 2-oxoglutarate + H(+) = 5-enolpyruvoyl-6-hydroxy-2-succinyl-cyclohex-3-ene-1-carboxylate + CO2. It participates in quinol/quinone metabolism; 1,4-dihydroxy-2-naphthoate biosynthesis; 1,4-dihydroxy-2-naphthoate from chorismate: step 2/7. Its pathway is quinol/quinone metabolism; menaquinone biosynthesis. Its function is as follows. Catalyzes the thiamine diphosphate-dependent decarboxylation of 2-oxoglutarate and the subsequent addition of the resulting succinic semialdehyde-thiamine pyrophosphate anion to isochorismate to yield 2-succinyl-5-enolpyruvyl-6-hydroxy-3-cyclohexene-1-carboxylate (SEPHCHC). This is 2-succinyl-5-enolpyruvyl-6-hydroxy-3-cyclohexene-1-carboxylate synthase from Shewanella sp. (strain W3-18-1).